Here is a 1140-residue protein sequence, read N- to C-terminus: Multiple epidermal growth factor-like domains protein 10 (1140 aa).

The signal sequence occupies residues 1 to 25 (MVISLNSCLSFICLLLCHWIGTASP). The necessary for interaction with AP2M1, self-assembly and formation of the irregular, mosaic-like adhesion pattern stretch occupies residues 1 to 857 (MVISLNSCLS…ALPADSYQIG (857 aa)). Residues 26–857 (LNLEDPNVCS…ALPADSYQIG (832 aa)) lie on the Extracellular side of the membrane. In terms of domain architecture, EMI spans 30–107 (DPNVCSHWES…FYESGEMCVP (78 aa)). 48 cysteine pairs are disulfide-bonded: cysteine 34/cysteine 95, cysteine 60/cysteine 69, cysteine 94/cysteine 105, cysteine 109/cysteine 118, cysteine 113/cysteine 124, cysteine 126/cysteine 135, cysteine 148/cysteine 160, cysteine 154/cysteine 167, cysteine 169/cysteine 178, cysteine 191/cysteine 203, cysteine 197/cysteine 210, cysteine 212/cysteine 221, cysteine 234/cysteine 246, cysteine 240/cysteine 253, cysteine 255/cysteine 264, cysteine 281/cysteine 289, cysteine 283/cysteine 296, cysteine 298/cysteine 307, cysteine 320/cysteine 332, cysteine 326/cysteine 339, cysteine 341/cysteine 350, cysteine 409/cysteine 421, cysteine 415/cysteine 428, cysteine 430/cysteine 439, cysteine 456/cysteine 464, cysteine 458/cysteine 471, cysteine 473/cysteine 482, cysteine 495/cysteine 507, cysteine 501/cysteine 514, cysteine 516/cysteine 525, cysteine 542/cysteine 550, cysteine 544/cysteine 557, cysteine 559/cysteine 568, cysteine 581/cysteine 593, cysteine 587/cysteine 600, cysteine 602/cysteine 611, cysteine 669/cysteine 681, cysteine 675/cysteine 688, cysteine 690/cysteine 699, cysteine 716/cysteine 724, cysteine 718/cysteine 731, cysteine 733/cysteine 742, cysteine 755/cysteine 767, cysteine 761/cysteine 774, cysteine 776/cysteine 785, cysteine 802/cysteine 810, cysteine 804/cysteine 817, and cysteine 819/cysteine 828. EGF-like domains are found at residues 106-136 (VPHC…TNCS), 144-179 (WGPH…WRCE), 187-222 (YGND…AFCE), 230-265 (HGPQ…TVCG), 278-308 (SQEC…ERCQ), 316-351 (YGVL…ERCE), 405-440 (YGEA…IDCS), 453-483 (SSRC…VDCS), 491-526 (WGFG…EKCE), 539-569 (AERC…VHCD), 577-612 (WGPN…TTCQ), 665-700 (FGKN…SDCS), 713-743 (IHTC…LYCT), 751-786 (YGKD…RHCE), and 799-829 (RQIC…ARCD). Asparagine 134 carries N-linked (GlcNAc...) asparagine glycosylation. The N-linked (GlcNAc...) asparagine glycan is linked to asparagine 496. The helical transmembrane segment at 858 to 878 (AIAGIIILVLVVLFLLALFII) threads the bilayer. Residues 879–1140 (YRHKQKGKES…SSSNSSSSSE (262 aa)) lie on the Cytoplasmic side of the membrane. The necessary for formation of large intracellular vacuoles stretch occupies residues 945–1140 (RDRMTVTKSK…SSSNSSSSSE (196 aa)). Tyrosine 1030 carries the phosphotyrosine; by SRC modification. The segment at 1111-1140 (YDLLPVRDSSSSPKQEDSGGSSSNSSSSSE) is disordered. Over residues 1128–1140 (SGGSSSNSSSSSE) the composition is skewed to low complexity.

Belongs to the MEGF family. As to quaternary structure, homomer. Interacts with GULP1 and ABCA1. Interacts with AP2M1. Does not interact with MEGF11. Binds with high affinity to complement C1q. Interacts (via the cytoplasmic domain) with NOTCH1 (via NICD domain). Post-translationally, phosphorylated on tyrosine residues. Phosphorylation at Tyr-1030 may be important for muscle cell proliferation. In terms of processing, ubiquitinated; mono- and polyubiquitinated forms are detected. As to expression, expressed in muscle (at protein level).

It is found in the cell membrane. Its subcellular location is the cell projection. The protein resides in the phagocytic cup. In terms of biological role, membrane receptor involved in phagocytosis by macrophages and astrocytes of apoptotic cells. Receptor for C1q, an eat-me signal, that binds phosphatidylserine expressed on the surface of apoptotic cells. Cooperates with ABCA1 within the process of engulfment. Promotes the formation of large intracellular vacuoles and may be responsible for the uptake of amyloid-beta peptides. Necessary for astrocyte-dependent apoptotic neuron clearance in the developing cerebellum. Plays role in muscle cell proliferation, adhesion and motility. Is also an essential factor in the regulation of myogenesis. Controls the balance between skeletal muscle satellite cells proliferation and differentiation through regulation of the notch signaling pathway. May also function in the mosaic spacing of specific neuron subtypes in the retina through homotypic retinal neuron repulsion. Mosaics provide a mechanism to distribute each cell type evenly across the retina, ensuring that all parts of the visual field have access to a full set of processing elements. The chain is Multiple epidermal growth factor-like domains protein 10 from Homo sapiens (Human).